The following is a 497-amino-acid chain: uncharacterized protein (497 aa).

Residues 58–79 are disordered; the sequence is ISTRSFRNDGNDSDPQTLDPDA. 12 helical membrane passes run 86 to 106, 120 to 140, 155 to 175, 180 to 200, 222 to 242, 258 to 278, 309 to 329, 348 to 368, 378 to 398, 407 to 427, 438 to 458, and 468 to 488; these read IAFVLLNSILSDMSMSTALPI, FSGLVIGIPTMISLVCLYPML, FRPLIVSCISQIIGHLLYSLA, WLYLILIGRMCNGVGFTMFLY, LNILAQTVGFMAGSFLGGLLA, VGSWFMLFAWCIYGILLSIFF, FMLVFLSMVAFISYFNIAGYQ, GNFLSLSALVIAPLVFLSTFL, MLYGFILGILALVVHLVLDVL, FVLYSAMQFGFSIGSAPLISL, ILVGIIVQIGISAADTVGAIC, and VGFIALNLGIAVLVFIQLLFL.

This sequence belongs to the major facilitator superfamily.

Its subcellular location is the membrane. This is an uncharacterized protein from Schizosaccharomyces pombe (strain 972 / ATCC 24843) (Fission yeast).